Here is a 170-residue protein sequence, read N- to C-terminus: MAADDHFSLFGLPARFALDPVQLEQAWRAVAARVHPDRYATASAAERRVAMQWAARANEAYRQLRDPMLRARYLCEQAGVDLQTESNTAMDPAFLMQQMEWREMLDDARRDPAAFAALRAELEQARLRMQQTLSELIDERGDYQQAGTKVREWMFVEKLAQELSAAQPMQ.

Residues 5 to 79 (DHFSLFGLPA…RARYLCEQAG (75 aa)) form the J domain.

It belongs to the HscB family. As to quaternary structure, interacts with HscA and stimulates its ATPase activity.

Co-chaperone involved in the maturation of iron-sulfur cluster-containing proteins. Seems to help targeting proteins to be folded toward HscA. The polypeptide is Co-chaperone protein HscB homolog (Bordetella parapertussis (strain 12822 / ATCC BAA-587 / NCTC 13253)).